A 302-amino-acid polypeptide reads, in one-letter code: Cyclin-dependent kinase 1-B (302 aa).

Residues 4-287 enclose the Protein kinase domain; it reads YTKIEKIGEG…ARKAMLHPYF (284 aa). Residues 10-18 and Lys33 contribute to the ATP site; that span reads IGEGTYGVV. A Phosphothreonine modification is found at Thr14. Tyr15 carries the phosphotyrosine; by wee1 and wee2 modification. The active-site Proton acceptor is the Asp128. At Thr161 the chain carries Phosphothreonine; by cak. Ser277 bears the Phosphoserine mark.

It belongs to the protein kinase superfamily. CMGC Ser/Thr protein kinase family. CDC2/CDKX subfamily. Forms a stable but non-covalent complex with a regulatory subunit and with a cyclin. Interacts with spdya. Phosphorylation at Tyr-15 by wee1 and wee2 inhibits the protein kinase activity and acts negative regulator of entry into mitosis (G2 to M transition).

It localises to the nucleus. It catalyses the reaction L-seryl-[protein] + ATP = O-phospho-L-seryl-[protein] + ADP + H(+). The catalysed reaction is L-threonyl-[protein] + ATP = O-phospho-L-threonyl-[protein] + ADP + H(+). The enzyme catalyses [DNA-directed RNA polymerase] + ATP = phospho-[DNA-directed RNA polymerase] + ADP + H(+). With respect to regulation, phosphorylation at Thr-14 or Tyr-15 inactivates the enzyme, while phosphorylation at Thr-161 activates it. Its function is as follows. Plays a key role in the control of the eukaryotic cell cycle by modulating the centrosome cycle as well as mitotic onset; promotes G2-M transition via association with multiple interphase cyclins. During G2 and early mitosis, CDC25A/B/C-mediated dephosphorylation activates CDK1/cyclin complexes which phosphorylate several substrates that trigger at least centrosome separation, Golgi dynamics, nuclear envelope breakdown and chromosome condensation. Once chromosomes are condensed and aligned at the metaphase plate, CDK1 activity is switched off by WEE1- and PKMYT1-mediated phosphorylation to allow sister chromatid separation, chromosome decondensation, reformation of the nuclear envelope and cytokinesis. Catalyzes lamin (LMNA, LMNB1 and LMNB2) phosphorylation at the onset of mitosis, promoting nuclear envelope breakdown. The polypeptide is Cyclin-dependent kinase 1-B (cdk1-b) (Xenopus laevis (African clawed frog)).